The chain runs to 79 residues: Delta-hormotoxin-Cpt1b (79 aa).

The signal sequence occupies residues 1 to 20 (MKTQVLALFVLCVLFCLAES). A propeptide spanning residues 21 to 31 (RTTLNKRNDIE) is cleaved from the precursor. 3 cysteine pairs are disulfide-bonded: cysteine 36/cysteine 75, cysteine 38/cysteine 66, and cysteine 56/cysteine 76.

The protein belongs to the sea anemone sodium channel inhibitory toxin family.

The protein localises to the secreted. The protein resides in the nematocyst. Functionally, in neuromuscular preparation of crustaceans, the toxin increased neurotransmitter release, causing repetitive firing of the axons. May affect sodium channels (Nav). In Calliactis parasitica (Sea anemone), this protein is Delta-hormotoxin-Cpt1b.